The following is a 455-amino-acid chain: MASKCLKAGFSSGSLKSPGGASGGSTRVSAMYSSSSCKLPSLSPVARSFSACSVGLGRSSYRATSCLPALCLPAGGFATSYSGGGGWFGEGILTGNEKETMQSLNDRLAGYLEKVRQLEQENASLESRIREWCEQQVPYMCPDYQSYFRTIEELQKKTLCSKAENARLVVEIDNAKLAADDFRTKYETEVSLRQLVESDINGLRRILDDLTLCKSDLEAQVESLKEELLCLKKNHEEEVNSLRCQLGDRLNVEVDAAPPVDLNRVLEEMRCQYETLVENNRRDAEDWLDTQSEELNQQVVSSSEQLQSCQAEIIELRRTVNALEIELQAQHSMRDALESTLAETEARYSSQLAQMQCMITNVEAQLAEIRADLERQNQEYQVLLDVRARLECEINTYRGLLESEDSKLPCNPCAPDYSPSKSCLPCLPAASCGPSAARTNCSPRPICVPCPGGRF.

Residues 1–97 form a head region; it reads MASKCLKAGF…FGEGILTGNE (97 aa). The 312-residue stretch at 97–408 folds into the IF rod domain; that stretch reads EKETMQSLND…GLLESEDSKL (312 aa). Positions 98-132 are coil 1A; it reads KETMQSLNDRLAGYLEKVRQLEQENASLESRIREW. Residues 133 to 143 are linker 1; the sequence is CEQQVPYMCPD. The interval 144-244 is coil 1B; the sequence is YQSYFRTIEE…HEEEVNSLRC (101 aa). A linker 12 region spans residues 245 to 260; it reads QLGDRLNVEVDAAPPV. The interval 261-404 is coil 2; the sequence is DLNRVLEEMR…NTYRGLLESE (144 aa). The tract at residues 405 to 455 is tail; that stretch reads DSKLPCNPCAPDYSPSKSCLPCLPAASCGPSAARTNCSPRPICVPCPGGRF.

It belongs to the intermediate filament family. In terms of tissue distribution, early expression in the hair follicle, mainly found in supramatricial cells and lowermost cortical cells of the hair bulb.

This chain is Keratin, type I cuticular Ha5 (KRT35), found in Homo sapiens (Human).